The chain runs to 1147 residues: MGKAAVEQRGVDDLVLMPKITEQDICANLEKRYFNDLIYTNIGPVLISVNPFRRIDALLTDECLHCYRGRYQHEQPPHVYALAEAAYRGVKSENINQCVIISGESGAGKTEASKLVMQYVAAVSGNSGGVDFVKHSNPLLEAFGNAKTLRNNNSSRFGKYFEIHFNRLGEPCGGRITNYLLEKSRVTFQTRGERSFHIFYQLLAGASDAEAQEMQLYAPENFNYLNQSACYTVDGIDDIKEFADTRNAINVMGMTAEEQRQVFHLVAGILHLGNVAFHDGGKGTAAVHDRTPFALKNALLFRVLNTGGAGAKKMSTYNVPQNVEQAASARDALAKTIYSRMFDWIVSKVNEALQKQGGSGDHNNNMIGVLDIFGFEIFEQNGFEQFCINYVNEKLQQYFIELTLKAEQEEYVNEGIQWTPIKYFNNKVVCELIEGKRPPGIFSLLDDICFTMHAQSDGMDGKFLQKCQGGFPSHLHFRGMNNAFSIKHYAGEVTYEAEGFCEKNKDTLFDDLIAVIQESENRLLVSWFPEDTKQLQKKRPTTAGFKLKTSCDALMEALSRCSPHYIRCIKPNDNKAYHDWDATRTKHQVQYLGLLENVRVRRAGFAYRAEFDRFLRRYKKLSPKTWGIWGEWSGAPKDGCQTLLNDLGLDTSQWQLGKSKVFIRYPETLFHLEECLDRKDYDCTLRIQKAWRHWKSRKHQLEQRKMAADLLKGKKERQRHSVNRKYEFDYINYDANYPLQDCVRSSGRDKEATAFTDQVLVLNRRGKPERRDLIVTNEAVYFAMRKKKSGQVVYNLKRRIPLGEIASLSLSTLQDNYVVIHHNQYDMVFENDKKTEIVTILMENYKMSGGRDLPVNFNDNITYKASNGAQRRLTFSKNESASAQPSIKKSRANIQIGIATGLPKETDSSPPNWTPSGGGGGYGGGRGGGGGGRGAAGGGRGGFGGGGGGGYSQPVAQAQPVAQVPQPVAAVPSAGRGGPGMGGPGAGRGGPGMGRGGPGMGGPGAGRGGPGMGGPGGPGRGGPGGPGAGRGGPGGPGAGRGGPGMGGPGGAGRGGPGAGRGGPGMGGPGAGRGGPGAGRGAAPAPAPAAPAKPQVKALYDYDAQTGDELTFKEGDTIIVHQKDPAGWWEGELNGKRGWVPANYVQDI.

In terms of domain architecture, Myosin motor spans 9-677 (RGVDDLVLMP…TLFHLEECLD (669 aa)). ATP is bound at residue 103–110 (GESGAGKT). A Phosphoserine modification is found at serine 315. The tract at residues 551–573 (CDALMEALSRCSPHYIRCIKPND) is actin-binding. A TH1 domain is found at 715–900 (KERQRHSVNR…RANIQIGIAT (186 aa)). Disordered stretches follow at residues 901-954 (GLPK…YSQP) and 969-1089 (AAVP…APAA). Gly residues-rich tracts occupy residues 916 to 951 (SGGGGGYGGGRGGGGGGRGAAGGGRGGFGGGGGGGY) and 975 to 1079 (GRGG…GAGR). The 58-residue stretch at 1090–1147 (PAKPQVKALYDYDAQTGDELTFKEGDTIIVHQKDPAGWWEGELNGKRGWVPANYVQDI) folds into the SH3 domain.

This sequence belongs to the TRAFAC class myosin-kinesin ATPase superfamily. Myosin family. As to quaternary structure, myosin I heavy chain is single-headed. Dimer of a heavy and a light chain. Inability to self-assemble into filaments.

Its function is as follows. Myosin is a protein that binds to F-actin and has ATPase activity that is activated by F-actin. This is Myosin heavy chain IB (MIB) from Acanthamoeba castellanii (Amoeba).